We begin with the raw amino-acid sequence, 325 residues long: Alpha-cuprenene synthase COP6 (325 aa).

Mg(2+)-binding residues include D102, E166, N224, S228, and E232.

The protein belongs to the trichodiene synthase family. Mg(2+) serves as cofactor.

In terms of biological role, alpha-cuprenene synthase; part of the gene cluster that mediates the biosynthesis of alpha-cuprenene and oxidized derivatives. The alpha-cuprenene synthase COP6 is the only sesquiterpene synthase identified in C.cinereus that appears to be part of a biosynthetic gene cluster and is highly specific since it catalyzes the cyclization of (2E,6E)-farnesyl diphosphate into only one product, alpha-cuprenene. COP6 is also able to perform the cyclization of geranyl diphosphate. The cytochrome P450 monooxygenase COX2 then oxidizes the cyclohexadiene ring of alpha-cuprenene at positions 1 and 4, yielding first alpha-cuparene, followed by alpha-cuparophenol and a further yet unidentified compound resulting from one additional oxidation step. The cytochrome P450 monooxygenase COX1 then likely catalyzes the oxidation at position 9 of the pentane ring of alpha-cuprenene to give the corresponding hydroxy or ketone derivatives. The protein is Alpha-cuprenene synthase COP6 of Coprinopsis cinerea (strain Okayama-7 / 130 / ATCC MYA-4618 / FGSC 9003) (Inky cap fungus).